The chain runs to 334 residues: Ornithine carbamoyltransferase (334 aa).

Carbamoyl phosphate-binding positions include 56–59, Gln83, Arg107, and 134–137; these read STRT and HPTQ. L-ornithine-binding positions include Asn168, Asp232, and 236-237; that span reads SM. Carbamoyl phosphate contacts are provided by residues 274 to 275 and Arg320; that span reads CL.

This sequence belongs to the aspartate/ornithine carbamoyltransferase superfamily. OTCase family. Homotrimer.

Its subcellular location is the cytoplasm. The catalysed reaction is carbamoyl phosphate + L-ornithine = L-citrulline + phosphate + H(+). It functions in the pathway amino-acid biosynthesis; L-arginine biosynthesis; L-arginine from L-ornithine and carbamoyl phosphate: step 1/3. Functionally, reversibly catalyzes the transfer of the carbamoyl group from carbamoyl phosphate (CP) to the N(epsilon) atom of ornithine (ORN) to produce L-citrulline. The protein is Ornithine carbamoyltransferase (argI) of Salmonella typhimurium (strain LT2 / SGSC1412 / ATCC 700720).